Reading from the N-terminus, the 346-residue chain is Heterogeneous nuclear ribonucleoprotein A2 homolog 1 (346 aa).

RRM domains follow at residues 9–92 (RKLF…ESAK) and 100–179 (KKLF…LSKQ). Disordered stretches follow at residues 182-217 (QDVQ…FRGG) and 326-346 (NYGP…RNRY). A compositionally biased stretch (gly residues) spans 193 to 217 (GNFGFGDSRGGGNFGSGPGGNFRGG). The tract at residues 297–340 (QQSSNYGPMKSGGNFGGNRSMGGGPYGGGNYGPGNASGGNGGGY) is nuclear targeting sequence.

Its subcellular location is the nucleus. Forms complexes (ribonucleosomes) with at least 20 other different hnRNP and heterogeneous nuclear RNA in the nucleus. This Xenopus laevis (African clawed frog) protein is Heterogeneous nuclear ribonucleoprotein A2 homolog 1.